Here is a 69-residue protein sequence, read N- to C-terminus: Alpha-elapitoxin-Lc2c (69 aa).

Intrachain disulfides connect cysteine 3/cysteine 20, cysteine 13/cysteine 41, cysteine 45/cysteine 56, and cysteine 57/cysteine 62.

This sequence belongs to the three-finger toxin family. Long-chain subfamily. Type II alpha-neurotoxin sub-subfamily. As to expression, expressed by the venom gland.

It localises to the secreted. Binds with high affinity to muscular nicotinic acetylcholine receptors (nAChRs), whereas it binds with a low affinity to neuronal alpha-7/CHRNA7 nAChRs. The sequence is that of Alpha-elapitoxin-Lc2c from Laticauda colubrina (Yellow-lipped sea krait).